The following is a 336-amino-acid chain: Phosphate acyltransferase (336 aa).

Belongs to the PlsX family. Homodimer. Probably interacts with PlsY.

It is found in the cytoplasm. The catalysed reaction is a fatty acyl-[ACP] + phosphate = an acyl phosphate + holo-[ACP]. It functions in the pathway lipid metabolism; phospholipid metabolism. Functionally, catalyzes the reversible formation of acyl-phosphate (acyl-PO(4)) from acyl-[acyl-carrier-protein] (acyl-ACP). This enzyme utilizes acyl-ACP as fatty acyl donor, but not acyl-CoA. This chain is Phosphate acyltransferase, found in Ectopseudomonas mendocina (strain ymp) (Pseudomonas mendocina).